The following is a 1173-amino-acid chain: Fas-binding factor 1 (1173 aa).

Positions 17–168 (MALRTKKGLK…PSSSKTGLQY (152 aa)) are disordered. Residues 46–56 (KPAEPASHAKD) are compositionally biased toward basic and acidic residues. Positions 80-93 (AGADAEASSVSDAD) are enriched in low complexity. Ser-172 is subject to Phosphoserine. Disordered stretches follow at residues 180-225 (LAGL…GDTP) and 241-566 (TTLG…SSRE). The segment covering 206–216 (SPGAAAGQGPS) has biased composition (low complexity). Composition is skewed to basic and acidic residues over residues 247–258 (DSPKAERKKTGD) and 287–299 (TGERREFQLDKKY). 4 stretches are compositionally biased toward polar residues: residues 331-345 (VASSEGRQSRRQSVS), 396-411 (SPVQKAQQEDSPMTPS), 468-477 (VISQKKSQNL), and 533-544 (TGSSMSWSQATT). Coiled-coil stretches lie at residues 617 to 742 (TAQL…QQAS), 808 to 917 (QQRE…MNKC), and 975 to 1057 (CELR…VQRQ). A Glycyl lysine isopeptide (Lys-Gly) (interchain with G-Cter in SUMO2) cross-link involves residue Lys-1002. Residues 1091–1124 (ASLPGLPPRVQGPAASSRDAVQAPASSSPQCSQP) are disordered. A compositionally biased stretch (low complexity) spans 1110 to 1124 (AVQAPASSSPQCSQP).

As to quaternary structure, interacts with PARD3. May interact with FAS cytoplasmic domain. Interacts with TRAPPC14. In terms of tissue distribution, broadly expressed.

The protein resides in the cytoplasm. Its subcellular location is the cytoskeleton. It is found in the microtubule organizing center. The protein localises to the centrosome. It localises to the centriole. The protein resides in the spindle pole. Its subcellular location is the cell junction. Its function is as follows. Keratin-binding protein required for epithelial cell polarization. Involved in apical junction complex (AJC) assembly via its interaction with PARD3. Required for ciliogenesis. The sequence is that of Fas-binding factor 1 (Fbf1) from Mus musculus (Mouse).